A 306-amino-acid chain; its full sequence is N-acetylmuramic acid 6-phosphate etherase (306 aa).

One can recognise an SIS domain in the interval 62–225 (IAQAFQNGGR…TTASMIRIGK (164 aa)). E90 functions as the Proton donor in the catalytic mechanism. E121 is a catalytic residue.

It belongs to the GCKR-like family. MurNAc-6-P etherase subfamily. Homodimer.

It carries out the reaction N-acetyl-D-muramate 6-phosphate + H2O = N-acetyl-D-glucosamine 6-phosphate + (R)-lactate. Its pathway is amino-sugar metabolism; 1,6-anhydro-N-acetylmuramate degradation. It functions in the pathway amino-sugar metabolism; N-acetylmuramate degradation. It participates in cell wall biogenesis; peptidoglycan recycling. Its function is as follows. Specifically catalyzes the cleavage of the D-lactyl ether substituent of MurNAc 6-phosphate, producing GlcNAc 6-phosphate and D-lactate. Together with AnmK, is also required for the utilization of anhydro-N-acetylmuramic acid (anhMurNAc) either imported from the medium or derived from its own cell wall murein, and thus plays a role in cell wall recycling. In Vibrio atlanticus (strain LGP32) (Vibrio splendidus (strain Mel32)), this protein is N-acetylmuramic acid 6-phosphate etherase.